Consider the following 329-residue polypeptide: MKGYLVAIFLSSIFLYYVLYCILWGTNGYWFPAEEMRTRNNVNNCFKKPAFANLLRFPQLYPFLCRADFIKVAAMSGTNNFPLPYGIKTFETYFSSALSKLQSCDLFDEFDRVPCKRCVVVGNGGVLKNKTLGATIDSYDVIIRMNNGPVLGHEEEVGTRTTFRLFYPESVFSDSSHYDPNTTAVLVVFKPQDLRWLVEILLGKKINTQGFWKTPALKLIYKQYQIRILDPYITSEAAFQMLRFPRVFPKDQKPKHPTTGIIAITMAFHICSEVHLAGFKYNFYSPNSPLHYYGNATMSLMKQNAYHNLTAEQLFLNDIIKKKMVINLT.

Over 1-4 (MKGY) the chain is Cytoplasmic. The helical; Signal-anchor for type II membrane protein transmembrane segment at 5–25 (LVAIFLSSIFLYYVLYCILWG) threads the bilayer. Topologically, residues 26 to 329 (TNGYWFPAEE…IKKKMVINLT (304 aa)) are lumenal. Residues Asn-129, Asn-181, Asn-295, and Asn-308 are each glycosylated (N-linked (GlcNAc...) asparagine).

This sequence belongs to the glycosyltransferase 29 family.

Its subcellular location is the golgi apparatus membrane. The catalysed reaction is a neolactoside nLc4Cer(d18:1(4E)) + CMP-N-acetyl-beta-neuraminate = a neolactoside IV(3)-alpha-NeuAc-nLc4Cer(d18:1(4E)) + CMP + H(+). It carries out the reaction a beta-D-galactosyl-(1-&gt;4)-N-acetyl-beta-D-glucosaminyl derivative + CMP-N-acetyl-beta-neuraminate = an N-acetyl-alpha-neuraminyl-(2-&gt;3)-beta-D-galactosyl-(1-&gt;4)-N-acetyl-beta-D-glucosaminyl derivative + CMP + H(+). It catalyses the reaction a neolactoside nLc6Cer(d18:1(4E)) + CMP-N-acetyl-beta-neuraminate = a neolactoside VI(3)-alpha-NeuNAc-nLc6Cer(d18:1(4E)) + CMP + H(+). Transfers the sialyl residue from CMP-N-acetyl-beta-neuraminate to the terminal galactose residue on sugar chains of glycoproteins and glycolipids. It's alpha-2,3-sialyltransferase activity is specific toward type II glycan chains (Galbeta1-4GlcNAc) on glycoproteins and glycolipids such as neolactosides nLc4Cer and nLc6Cer, whose sialyl-products serve as precursors for the Lewis X antigen. Critically involved in the synthesis of functional selectin ligands needed for neutrophil recruitment during inflammation and lymphocyte homing to the lymph nodes. This is Type 2 lactosamine alpha-2,3-sialyltransferase (St3gal6) from Mus musculus (Mouse).